The primary structure comprises 35 residues: Z-limacoditoxin(1)-Dv1 (35 aa).

The first 22 residues, 1–22 (MKKTFLPIFLVILLASYALANP), serve as a signal peptide directing secretion. The residue at position 23 (Gln-23) is a Pyrrolidone carboxylic acid. The residue at position 32 (Pro-32) is a Proline amide.

The protein belongs to the limacoditoxin-1 (ACP-like) family. Expressed by the venom secretory cell of the spine. The spine is a cuticular structure containing a single large nucleated venom-secreting cell at its base. It is an independent unit capable of producing, storing and injecting venom. On the back of D.vulnerans caterpillars, spines are grouped together by 50 to 100 to form scoli, of which there are eight in D.vulnerans.

The protein localises to the secreted. In terms of biological role, potently activates insect G protein-coupled receptor. It activates the ACP receptor (ACPR) from the mosquito A.aegypti (EC(50)=0.55 nM) with a potency comparable to that of the endogenous ligand. Has no activity on receptors of the closely related neuropeptides adipokinetic hormone and corazonin. In vivo, does not reveal any observable effects when injected into crickets (A.domesticus). Does not induce increase in intracellular calcium in mouse DRG neurons, suggesting that it does not induce pain. The polypeptide is Z-limacoditoxin(1)-Dv1 (Doratifera vulnerans (Mottled cup moth)).